We begin with the raw amino-acid sequence, 96 residues long: Aspartyl/glutamyl-tRNA(Asn/Gln) amidotransferase subunit C (96 aa).

Belongs to the GatC family. As to quaternary structure, heterotrimer of A, B and C subunits.

It catalyses the reaction L-glutamyl-tRNA(Gln) + L-glutamine + ATP + H2O = L-glutaminyl-tRNA(Gln) + L-glutamate + ADP + phosphate + H(+). The catalysed reaction is L-aspartyl-tRNA(Asn) + L-glutamine + ATP + H2O = L-asparaginyl-tRNA(Asn) + L-glutamate + ADP + phosphate + 2 H(+). In terms of biological role, allows the formation of correctly charged Asn-tRNA(Asn) or Gln-tRNA(Gln) through the transamidation of misacylated Asp-tRNA(Asn) or Glu-tRNA(Gln) in organisms which lack either or both of asparaginyl-tRNA or glutaminyl-tRNA synthetases. The reaction takes place in the presence of glutamine and ATP through an activated phospho-Asp-tRNA(Asn) or phospho-Glu-tRNA(Gln). The protein is Aspartyl/glutamyl-tRNA(Asn/Gln) amidotransferase subunit C of Sulfurovum sp. (strain NBC37-1).